A 436-amino-acid chain; its full sequence is Anaerobic glycerol-3-phosphate dehydrogenase subunit B (436 aa).

The protein belongs to the anaerobic G-3-P dehydrogenase subunit B family. As to quaternary structure, composed of a catalytic GlpA/B dimer and of membrane bound GlpC. FMN serves as cofactor.

The enzyme catalyses a quinone + sn-glycerol 3-phosphate = dihydroxyacetone phosphate + a quinol. It functions in the pathway polyol metabolism; glycerol degradation via glycerol kinase pathway; glycerone phosphate from sn-glycerol 3-phosphate (anaerobic route): step 1/1. Functionally, conversion of glycerol 3-phosphate to dihydroxyacetone. Uses fumarate or nitrate as electron acceptor. The protein is Anaerobic glycerol-3-phosphate dehydrogenase subunit B of Vibrio cholerae serotype O1 (strain M66-2).